The sequence spans 84 residues: Large ribosomal subunit protein bL27 (84 aa).

Residues 1–21 (MAHKKGGGSTKNGRDSNPKYL) are disordered.

Belongs to the bacterial ribosomal protein bL27 family.

The chain is Large ribosomal subunit protein bL27 from Chlorobium luteolum (strain DSM 273 / BCRC 81028 / 2530) (Pelodictyon luteolum).